The sequence spans 125 residues: Large ribosomal subunit protein uL22 (125 aa).

Belongs to the universal ribosomal protein uL22 family. As to quaternary structure, part of the 50S ribosomal subunit.

Its function is as follows. This protein binds specifically to 23S rRNA; its binding is stimulated by other ribosomal proteins, e.g. L4, L17, and L20. It is important during the early stages of 50S assembly. It makes multiple contacts with different domains of the 23S rRNA in the assembled 50S subunit and ribosome. Functionally, the globular domain of the protein is located near the polypeptide exit tunnel on the outside of the subunit, while an extended beta-hairpin is found that lines the wall of the exit tunnel in the center of the 70S ribosome. The protein is Large ribosomal subunit protein uL22 of Thermobifida fusca (strain YX).